The sequence spans 37 residues: Large ribosomal subunit protein bL36 (37 aa).

This sequence belongs to the bacterial ribosomal protein bL36 family.

The protein is Large ribosomal subunit protein bL36 of Mycobacteroides abscessus (strain ATCC 19977 / DSM 44196 / CCUG 20993 / CIP 104536 / JCM 13569 / NCTC 13031 / TMC 1543 / L948) (Mycobacterium abscessus).